The chain runs to 316 residues: Ribosomal RNA small subunit methyltransferase H (316 aa).

S-adenosyl-L-methionine contacts are provided by residues 35 to 37 (GGH), Asp55, Phe79, Asp101, and Gln108.

Belongs to the methyltransferase superfamily. RsmH family.

The protein localises to the cytoplasm. It catalyses the reaction cytidine(1402) in 16S rRNA + S-adenosyl-L-methionine = N(4)-methylcytidine(1402) in 16S rRNA + S-adenosyl-L-homocysteine + H(+). Functionally, specifically methylates the N4 position of cytidine in position 1402 (C1402) of 16S rRNA. In Aliivibrio fischeri (strain MJ11) (Vibrio fischeri), this protein is Ribosomal RNA small subunit methyltransferase H.